The sequence spans 245 residues: MTFTASSSSCAITESPVVVALDYHERDKALAFVDKIDPRDCRLKVGKEMFTLFGPQLVRDLQQRGFDVFLDLKFHDIPNTTARAVAAAADLGVWMVNVHASGGARMMAAARDALAPFGKDAPLLIAVTVLTSMETSDLHDLGVTLSPAEHAERLARLTQQCGLDGVVCSAQEAVRFKQVFGAAFKLVTPGIRPAGSEAGDQRRIMTPEQALSAGVDYMVIGRPVTQSVDPAQTLKDINASLKREA.

Substrate is bound by residues D22, K44, 71 to 80, T131, R192, Q201, G221, and R222; that span reads DLKFHDIPNT. K73 (proton donor) is an active-site residue.

It belongs to the OMP decarboxylase family. Type 1 subfamily. Homodimer.

The catalysed reaction is orotidine 5'-phosphate + H(+) = UMP + CO2. It participates in pyrimidine metabolism; UMP biosynthesis via de novo pathway; UMP from orotate: step 2/2. In terms of biological role, catalyzes the decarboxylation of orotidine 5'-monophosphate (OMP) to uridine 5'-monophosphate (UMP). This is Orotidine 5'-phosphate decarboxylase from Salmonella newport (strain SL254).